The sequence spans 318 residues: BRISC and BRCA1-A complex member 1 (318 aa).

Residues 1–67 (MDTSEPLEEG…TTAVPTNCTP (67 aa)) are disordered. A compositionally biased stretch (basic and acidic residues) spans 9-18 (EGDRTHEQRP). Positions 86–287 (VIICLDLSEE…LELHNCMARL (202 aa)) are VWFA-like.

It belongs to the BABAM1 family. Component of the ARISC complex, at least composed of uimc1/rap80, abraxas1, brcc3/brcc36, BABAM2 and babam1/nba1. Component of the BRCA1-A complex, at least composed of brca1, bard1, uimc1/rap80, abraxas1, brcc3/brcc36, BABAM2 and babam1/nba1. In the BRCA1-A complex, interacts directly with abraxas1 and BABAM2. Component of the BRISC complex, at least composed of abraxas2, brcc3/brcc36, babam2 and babam1/nba1.

Its subcellular location is the cytoplasm. It localises to the nucleus. In terms of biological role, component of the BRCA1-A complex, a complex that specifically recognizes 'Lys-63'-linked ubiquitinated histones H2A and H2AX at DNA lesions sites, leading to target the BRCA1-BARD1 heterodimer to sites of DNA damage at double-strand breaks (DSBs). The BRCA1-A complex also possesses deubiquitinase activity that specifically removes 'Lys-63'-linked ubiquitin on histones H2A and H2AX. In the BRCA1-A complex, it is required for the complex integrity and its localization at DSBs. Component of the BRISC complex, a multiprotein complex that specifically cleaves 'Lys-63'-linked ubiquitin in various substrates. In these 2 complexes, it is probably required to maintain the stability of BABAM2 and help the 'Lys-63'-linked deubiquitinase activity mediated by brcc3/brcc36 component. The BRISC complex is required for normal mitotic spindle assembly and microtubule attachment to kinetochores via its role in deubiquitinating numa1. Plays a role in interferon signaling via its role in the deubiquitination of the interferon receptor ifnar1; deubiquitination increases ifnar1 activity by enhancing its stability and cell surface expression. Down-regulates the response to bacterial lipopolysaccharide (LPS) via its role in ifnar1 deubiquitination. In Xenopus tropicalis (Western clawed frog), this protein is BRISC and BRCA1-A complex member 1 (babam1).